Consider the following 194-residue polypeptide: dCTP deaminase (194 aa).

DCTP-binding positions include R110 to R115, D128, V136 to E138, Y171, K178, and Q182. The Proton donor/acceptor role is filled by E138. Residues S173–R194 are disordered. Over residues K180–R194 the composition is skewed to polar residues.

It belongs to the dCTP deaminase family. In terms of assembly, homotrimer.

It carries out the reaction dCTP + H2O + H(+) = dUTP + NH4(+). The protein operates within pyrimidine metabolism; dUMP biosynthesis; dUMP from dCTP (dUTP route): step 1/2. Its function is as follows. Catalyzes the deamination of dCTP to dUTP. In Actinobacillus succinogenes (strain ATCC 55618 / DSM 22257 / CCUG 43843 / 130Z), this protein is dCTP deaminase.